Consider the following 239-residue polypeptide: 4-hydroxy-tetrahydrodipicolinate reductase (239 aa).

NAD(+) is bound by residues D32, 73–75 (GTT), and 98–101 (ASNF). The active-site Proton donor/acceptor is the H133. H134 is a (S)-2,3,4,5-tetrahydrodipicolinate binding site. K137 functions as the Proton donor in the catalytic mechanism. 143–144 (GT) provides a ligand contact to (S)-2,3,4,5-tetrahydrodipicolinate.

The protein belongs to the DapB family.

Its subcellular location is the cytoplasm. It catalyses the reaction (S)-2,3,4,5-tetrahydrodipicolinate + NAD(+) + H2O = (2S,4S)-4-hydroxy-2,3,4,5-tetrahydrodipicolinate + NADH + H(+). The enzyme catalyses (S)-2,3,4,5-tetrahydrodipicolinate + NADP(+) + H2O = (2S,4S)-4-hydroxy-2,3,4,5-tetrahydrodipicolinate + NADPH + H(+). It functions in the pathway amino-acid biosynthesis; L-lysine biosynthesis via DAP pathway; (S)-tetrahydrodipicolinate from L-aspartate: step 4/4. Functionally, catalyzes the conversion of 4-hydroxy-tetrahydrodipicolinate (HTPA) to tetrahydrodipicolinate. This is 4-hydroxy-tetrahydrodipicolinate reductase from Christiangramia forsetii (strain DSM 17595 / CGMCC 1.15422 / KT0803) (Gramella forsetii).